The sequence spans 364 residues: Monocarboxylate 2-oxoacid-binding periplasmic protein all3028 (364 aa).

The signal sequence occupies residues 1–26; sequence MKRREVLNTAAIATATTALVSCTQTN. Substrate contacts are provided by residues 103 to 104, Gln-160, and Arg-181; that span reads YY. Gln-160 contributes to the Na(+) binding site. Na(+) contacts are provided by Glu-218, Trp-219, and Glu-244.

The protein belongs to the bacterial solute-binding protein 7 family. In terms of assembly, homodimer. The complex comprises the extracytoplasmic solute receptor protein all3028, and the two putative transmembrane proteins alr3026 and alr3027.

It localises to the periplasm. With respect to regulation, pyruvate uptake inhibited by 2-oxobutyrate, 2-oxovalerate, 2-oxoisovalerate, 2-oxoisocaproate and 2-oxo-3-methylvalerate. Its function is as follows. Part of the tripartite ATP-independent periplasmic (TRAP) transport system involved in the uptake of monocarboxylate 2-oxoacids. This protein specifically binds monocarboxylate 2-oxoacids including pyruvate, 2-oxobutyrate, 2-oxovalerate, 2-oxoisovalerate, 2-oxoisocaproate and 2-oxo-3-methylvalerate. Is not able to bind mannitol. The chain is Monocarboxylate 2-oxoacid-binding periplasmic protein all3028 from Nostoc sp. (strain PCC 7120 / SAG 25.82 / UTEX 2576).